The following is a 167-amino-acid chain: uncharacterized protein (167 aa).

Over residues 1–13 (MQGDIRRKKDLLP) the composition is skewed to basic and acidic residues. 2 disordered regions span residues 1–26 (MQGDIRRKKDLLPRYKTGSKYNSRRR) and 67–167 (ESHS…ILDN). Positions 71-80 (SDVSASASDH) are enriched in low complexity. Residues 102–156 (VPKEKFNNEVAKQQEVKNLENDLKPQIDSEKQKQINKDKKEQKQQLQKEKQDLAK) show a composition bias toward basic and acidic residues.

This is an uncharacterized protein from Saccharomyces cerevisiae (strain ATCC 204508 / S288c) (Baker's yeast).